Consider the following 273-residue polypeptide: Imidazole glycerol phosphate synthase subunit HisF (273 aa).

Catalysis depends on residues Asp-11 and Asp-134.

Belongs to the HisA/HisF family. Heterodimer of HisH and HisF.

It is found in the cytoplasm. It carries out the reaction 5-[(5-phospho-1-deoxy-D-ribulos-1-ylimino)methylamino]-1-(5-phospho-beta-D-ribosyl)imidazole-4-carboxamide + L-glutamine = D-erythro-1-(imidazol-4-yl)glycerol 3-phosphate + 5-amino-1-(5-phospho-beta-D-ribosyl)imidazole-4-carboxamide + L-glutamate + H(+). It functions in the pathway amino-acid biosynthesis; L-histidine biosynthesis; L-histidine from 5-phospho-alpha-D-ribose 1-diphosphate: step 5/9. IGPS catalyzes the conversion of PRFAR and glutamine to IGP, AICAR and glutamate. The HisF subunit catalyzes the cyclization activity that produces IGP and AICAR from PRFAR using the ammonia provided by the HisH subunit. The sequence is that of Imidazole glycerol phosphate synthase subunit HisF from Methanocella arvoryzae (strain DSM 22066 / NBRC 105507 / MRE50).